The following is a 338-amino-acid chain: Ribonucleoside-diphosphate reductase small subunit (338 aa).

Asp81, Glu112, and His115 together coordinate Fe cation. Tyr119 is an active-site residue. The Fe cation site is built by Glu174, Glu208, and His211.

This sequence belongs to the ribonucleoside diphosphate reductase small chain family. As to quaternary structure, heterodimer of a large and a small subunit. It depends on Fe cation as a cofactor.

The protein resides in the cytoplasm. It catalyses the reaction a 2'-deoxyribonucleoside 5'-diphosphate + [thioredoxin]-disulfide + H2O = a ribonucleoside 5'-diphosphate + [thioredoxin]-dithiol. Functionally, provides the precursors necessary for DNA synthesis. Catalyzes the biosynthesis of deoxyribonucleotides from the corresponding ribonucleotides. This chain is Ribonucleoside-diphosphate reductase small subunit (rnrB-1), found in Dictyostelium discoideum (Social amoeba).